Consider the following 155-residue polypeptide: Ribosome maturation factor RimP (155 aa).

The protein belongs to the RimP family.

It is found in the cytoplasm. In terms of biological role, required for maturation of 30S ribosomal subunits. This chain is Ribosome maturation factor RimP, found in Desulforapulum autotrophicum (strain ATCC 43914 / DSM 3382 / VKM B-1955 / HRM2) (Desulfobacterium autotrophicum).